The primary structure comprises 507 residues: ATP synthase subunit alpha, chloroplastic (507 aa).

Gly-170 to Thr-177 serves as a coordination point for ATP.

Belongs to the ATPase alpha/beta chains family. In terms of assembly, F-type ATPases have 2 components, CF(1) - the catalytic core - and CF(0) - the membrane proton channel. CF(1) has five subunits: alpha(3), beta(3), gamma(1), delta(1), epsilon(1). CF(0) has four main subunits: a, b, b' and c.

It is found in the plastid. The protein localises to the chloroplast thylakoid membrane. It catalyses the reaction ATP + H2O + 4 H(+)(in) = ADP + phosphate + 5 H(+)(out). Produces ATP from ADP in the presence of a proton gradient across the membrane. The alpha chain is a regulatory subunit. The protein is ATP synthase subunit alpha, chloroplastic of Dioscorea elephantipes (Elephant's foot yam).